We begin with the raw amino-acid sequence, 393 residues long: MQDVVIVAATRTAVGSFQGSLAGIPAPELGAAVIRRLLEQTGLDAGQVDEVILGQVLTAGSGQNPARQAAIKAGLPVGVPAMTLNKVCGSGLKALHLGAQAIRCGDAEVIVAGGQENMSLAPYVMPGARTGLRMGHAKLVDSMIEDGLWDAFNDYHMGITAENLAEKYGLTREEQDAFAAASQQKAIAAIEGGRFRDEITPIQVPQRKGEPLGFDTDEQPRAGTTVEALAKLKPAFRKDGSVTAGNASSLNDGAAAVLLMSAAKAKALGLPVLARIASYASAGVDPAIMGIGPVSATRRALDKAGWSLEQLDLIEANEAFAAQSLAVGRELGWDAARVNVNGGAIALGHPIGASGCRVLVTLLHEMIRRDAKKGLATLCIGGGQGVALTLARD.

Cys-88 serves as the catalytic Acyl-thioester intermediate. Residues His-349 and Cys-379 each act as proton acceptor in the active site.

The protein belongs to the thiolase-like superfamily. Thiolase family.

Its subcellular location is the cytoplasm. The catalysed reaction is 2 acetyl-CoA = acetoacetyl-CoA + CoA. It functions in the pathway metabolic intermediate biosynthesis; (R)-mevalonate biosynthesis; (R)-mevalonate from acetyl-CoA: step 1/3. This is Acetyl-CoA acetyltransferase (atoB) from Pseudomonas aeruginosa (strain ATCC 15692 / DSM 22644 / CIP 104116 / JCM 14847 / LMG 12228 / 1C / PRS 101 / PAO1).